Reading from the N-terminus, the 406-residue chain is Proteasome-activating nucleotidase 1 (406 aa).

A compositionally biased stretch (acidic residues) spans 1 to 12 (MTDTVEDVELPY). The interval 1 to 20 (MTDTVEDVELPYDDSASQQD) is disordered. The stretch at 12–70 (YDDSASQQDKLEALEEQLSTLEEENEEMRDRLLDANAENNKYQQKLERLSHENKKLKQS) forms a coiled coil. Residues 192 to 197 (GTGKTL) and His-331 each bind ATP. Residues 385 to 406 (AREKLDQDSEPAAATDVSRTFA) form a disordered region. A docks into pockets in the proteasome alpha-ring to cause gate opening region spans residues 404–406 (TFA).

It belongs to the AAA ATPase family. As to quaternary structure, homohexamer. The hexameric complex has a two-ring architecture resembling a top hat that caps the 20S proteasome core at one or both ends. Upon ATP-binding, the C-terminus of PAN interacts with the alpha-rings of the proteasome core by binding to the intersubunit pockets.

It is found in the cytoplasm. In terms of biological role, ATPase which is responsible for recognizing, binding, unfolding and translocation of substrate proteins into the archaeal 20S proteasome core particle. Is essential for opening the gate of the 20S proteasome via an interaction with its C-terminus, thereby allowing substrate entry and access to the site of proteolysis. Thus, the C-termini of the proteasomal ATPase function like a 'key in a lock' to induce gate opening and therefore regulate proteolysis. Unfolding activity requires energy from ATP hydrolysis, whereas ATP binding alone promotes ATPase-20S proteasome association which triggers gate opening, and supports translocation of unfolded substrates. This chain is Proteasome-activating nucleotidase 1, found in Halobacterium salinarum (strain ATCC 700922 / JCM 11081 / NRC-1) (Halobacterium halobium).